A 355-amino-acid chain; its full sequence is tRNA N6-adenosine threonylcarbamoyltransferase (355 aa).

Fe cation is bound by residues His113 and His117. Substrate is bound by residues 135-139, Asp168, Gly181, and Asn279; that span reads LASGG. Fe cation is bound at residue Asp307.

This sequence belongs to the KAE1 / TsaD family. Fe(2+) serves as cofactor.

Its subcellular location is the cytoplasm. The enzyme catalyses L-threonylcarbamoyladenylate + adenosine(37) in tRNA = N(6)-L-threonylcarbamoyladenosine(37) in tRNA + AMP + H(+). In terms of biological role, required for the formation of a threonylcarbamoyl group on adenosine at position 37 (t(6)A37) in tRNAs that read codons beginning with adenine. Is involved in the transfer of the threonylcarbamoyl moiety of threonylcarbamoyl-AMP (TC-AMP) to the N6 group of A37, together with TsaE and TsaB. TsaD likely plays a direct catalytic role in this reaction. In Bradyrhizobium sp. (strain BTAi1 / ATCC BAA-1182), this protein is tRNA N6-adenosine threonylcarbamoyltransferase.